Here is a 155-residue protein sequence, read N- to C-terminus: MKKLIIIFTLFLSQACNLSTMHKIDTKEDMKILYSEIAELRKKLNLNHLEIDDTLEKVAKEYAIKLGENRTITHTLFGTTPMQRIHKYDQSFNLTREILASGIELNRVVNAWLNSPSHKEALINTDTDKIGGYRLKTTDNIDIFVVLFGKRKYKN.

An SCP domain is found at 37 to 140; that stretch reads IAELRKKLNL…GGYRLKTTDN (104 aa).

This is an uncharacterized protein from Borreliella burgdorferi (strain ATCC 35210 / DSM 4680 / CIP 102532 / B31) (Borrelia burgdorferi).